The chain runs to 526 residues: Putative UDP-glucuronosyltransferase ugt-48 (526 aa).

An N-terminal signal peptide occupies residues 1–17 (MLLRILTFLAVCQVTTS). Residues N58 and N305 are each glycosylated (N-linked (GlcNAc...) asparagine). A helical transmembrane segment spans residues 489–509 (FYNLDIIITAASIPVLIFIVL). A glycan (N-linked (GlcNAc...) asparagine) is linked at N513.

This sequence belongs to the UDP-glycosyltransferase family. As to quaternary structure, interacts with cmd-1 in the presence of Ca(2+).

Its subcellular location is the membrane. The catalysed reaction is glucuronate acceptor + UDP-alpha-D-glucuronate = acceptor beta-D-glucuronoside + UDP + H(+). The protein is Putative UDP-glucuronosyltransferase ugt-48 (ugt-48) of Caenorhabditis elegans.